Here is a 118-residue protein sequence, read N- to C-terminus: Ly-6/neurotoxin-like protein 1 (118 aa).

The N-terminal stretch at 1-22 (MTPLLTLFLVVLMGLPLAPVQA) is a signal peptide. The UPAR/Ly6 domain occupies 23–107 (LDCHVCAYNG…LAIPATLALA (85 aa)). 5 disulfides stabilise this stretch: C25–C48, C28–C35, C41–C66, C70–C87, and C88–C93. S95 is lipidated: GPI-anchor amidated serine. A propeptide spans 96–118 (AGLAIPATLALAPVLLATLWGLL) (removed in mature form).

In terms of assembly, interacts with nAChRs containing alpha-4:beta-2 (CHRNA4:CHRNB2) and alpha-7 (CHRNA7) subunits. Interacts with CHRNA4 probably in the endoplasmic reticulum prior to nAChR pentameric assembly. Interacts with KCNA2/Potassium voltage-gated channel subfamily A member 2. In terms of tissue distribution, expressed in lung predominantly in airway epithelial cells, submucous glands, and smooth muscle cells, in endothelial and smooth muscle cells in vessel walls and in alveolar type II cells (at protein level). Also expressed in brain.

The protein localises to the cell membrane. It is found in the cell projection. The protein resides in the dendrite. Its subcellular location is the endoplasmic reticulum. Acts in different tissues through interaction to nicotinic acetylcholine receptors (nAChRs). The proposed role as modulator of nAChR activity seems to be dependent on the nAChR subtype and stoichiometry, and to involve an effect on nAChR trafficking and its cell surface expression, and on single channel properties of the nAChR inserted in the plasma membrane. Modulates functional properties of nicotinic acetylcholine receptors (nAChRs) to prevent excessive excitation, and hence neurodegeneration. Enhances desensitization by increasing both the rate and extent of desensitization of alpha-4:beta-2-containing nAChRs and slowing recovery from desensitization. Promotes large amplitude ACh-evoked currents through alpha-4:beta-2 nAChRs. Is involved in regulation of the nAChR pentameric assembly in the endoplasmic reticulum. Shifts stoichiometry from high sensitivity alpha-4(2):beta-2(3) to low sensitivity alpha-4(3):beta-2(2) nAChR. In vitro modulates alpha-3:beta-4-containing nAChRs. Reduces cell surface expression of (alpha-3:beta-4)(2):beta-4 and (alpha-3:beta-4)(2):alpha-5 nAChRs suggesting an interaction with nAChR alpha-3(-):(+)beta-4 subunit interfaces and an allosteric mode. Corresponding single channel effects characterized by decreased unitary conductance, altered burst proportions and enhanced desensitization/inactivation seem to depend on nAChR alpha:alpha subunit interfaces and are greater in (alpha-3:beta-2)(2):alpha-3 when compared to (alpha-3:beta-2)(2):alpha-5 nAChRs. Prevents plasticity in the primary visual cortex late in life. The protein is Ly-6/neurotoxin-like protein 1 of Macaca mulatta (Rhesus macaque).